The chain runs to 283 residues: MKITRRPEWLQKKISPSAHAEMERLLGDLQLHTVCQEAHCPNISECFRSRQATFLILGNICTRLCSFCNVTKQSPHHFDPDEPARVAAAVQKLQLSHVVITSPTRDDLPDGGAGLYAQTVTAIRKAAPQTAIELLIPDFMGDHGSIAAVVAACPDISGHNLETVPRLYHIRSGADYRRSLDVLKIIHDLDPRLLTKSGLMLGLGETEVEIFQVLDDLLAVGCSYLSLGQYLAPSRSHYPVQGYVPPEIFDNYRERALAMGFKHVESGPYVRSSYHAEQYGMKG.

[4Fe-4S] cluster is bound by residues C35, C40, C46, C61, C65, C68, and S273. Residues F47–K262 enclose the Radical SAM core domain.

The protein belongs to the radical SAM superfamily. Lipoyl synthase family. It depends on [4Fe-4S] cluster as a cofactor.

It localises to the cytoplasm. It catalyses the reaction [[Fe-S] cluster scaffold protein carrying a second [4Fe-4S](2+) cluster] + N(6)-octanoyl-L-lysyl-[protein] + 2 oxidized [2Fe-2S]-[ferredoxin] + 2 S-adenosyl-L-methionine + 4 H(+) = [[Fe-S] cluster scaffold protein] + N(6)-[(R)-dihydrolipoyl]-L-lysyl-[protein] + 4 Fe(3+) + 2 hydrogen sulfide + 2 5'-deoxyadenosine + 2 L-methionine + 2 reduced [2Fe-2S]-[ferredoxin]. Its pathway is protein modification; protein lipoylation via endogenous pathway; protein N(6)-(lipoyl)lysine from octanoyl-[acyl-carrier-protein]: step 2/2. Its function is as follows. Catalyzes the radical-mediated insertion of two sulfur atoms into the C-6 and C-8 positions of the octanoyl moiety bound to the lipoyl domains of lipoate-dependent enzymes, thereby converting the octanoylated domains into lipoylated derivatives. The sequence is that of Lipoyl synthase from Geotalea uraniireducens (strain Rf4) (Geobacter uraniireducens).